The chain runs to 192 residues: uncharacterized protein (192 aa).

2 disordered regions span residues 1 to 37 (MASS…PAFP) and 146 to 192 (ARGP…EQNK). Composition is skewed to pro residues over residues 8–19 (TPSPAGLPPPSV) and 159–180 (APPP…PGWP).

This is an uncharacterized protein from Homo sapiens (Human).